A 208-amino-acid polypeptide reads, in one-letter code: MNYPNGKPFNRNKSQVGRTHKGQTSKIDYGGRGMSLEKDIELSNDYYLNRGIAVIHKKPTPIQIVNVHYPMRSKAVINEAYFRTPSTTDYNGIYHGRYLDFEAKETKNKTSFPLNNMHEHQVRHMEACYQQQGVVFLLIRFKSLDEVYLLPYANFKKFWERHIQEIKKSVTVEEIRKNGYYIPYQYQPRLNYLKTVDKLILDESEDRV.

The disordered stretch occupies residues 1 to 30 (MNYPNGKPFNRNKSQVGRTHKGQTSKIDYG). Mg(2+) is bound by residues threonine 87, aspartate 89, glutamate 102, and glutamine 121.

It belongs to the RecU family. Requires Mg(2+) as cofactor.

It is found in the cytoplasm. The enzyme catalyses Endonucleolytic cleavage at a junction such as a reciprocal single-stranded crossover between two homologous DNA duplexes (Holliday junction).. Functionally, endonuclease that resolves Holliday junction intermediates in genetic recombination. Cleaves mobile four-strand junctions by introducing symmetrical nicks in paired strands. Promotes annealing of linear ssDNA with homologous dsDNA. Required for DNA repair, homologous recombination and chromosome segregation. The protein is Holliday junction resolvase RecU of Staphylococcus saprophyticus subsp. saprophyticus (strain ATCC 15305 / DSM 20229 / NCIMB 8711 / NCTC 7292 / S-41).